Reading from the N-terminus, the 45-residue chain is ADLIERRQRSEFQFSAVGLGPRTDYEVDILTTFTKLNYEAYTYPR.

The protein localises to the plastid. The protein resides in the chloroplast thylakoid. The sequence is that of Unknown protein from spots 23/28/205 of 2D-PAGE of thylakoid from Pisum sativum (Garden pea).